Reading from the N-terminus, the 124-residue chain is Large ribosomal subunit protein bL17 (124 aa).

This sequence belongs to the bacterial ribosomal protein bL17 family. In terms of assembly, part of the 50S ribosomal subunit. Contacts protein L32.

The chain is Large ribosomal subunit protein bL17 from Persephonella marina (strain DSM 14350 / EX-H1).